We begin with the raw amino-acid sequence, 320 residues long: Malate dehydrogenase (320 aa).

NAD(+) is bound by residues 10–15 (GAGQIG) and Asp-34. Substrate contacts are provided by Arg-83 and Arg-89. NAD(+) contacts are provided by residues Asn-96 and 119-121 (ITN). Residues Asn-121 and Arg-152 each coordinate substrate. Residue His-176 is the Proton acceptor of the active site.

This sequence belongs to the LDH/MDH superfamily. MDH type 3 family.

It carries out the reaction (S)-malate + NAD(+) = oxaloacetate + NADH + H(+). Functionally, catalyzes the reversible oxidation of malate to oxaloacetate. In Methylorubrum extorquens (strain CM4 / NCIMB 13688) (Methylobacterium extorquens), this protein is Malate dehydrogenase.